A 608-amino-acid chain; its full sequence is uncharacterized protein (608 aa).

A signal peptide spans 1–38; it reads MWLQQRLKVFPGLLSSSWARRVLAVSGFLVIIYWYIFS. The Extracellular portion of the chain corresponds to 39-563; that stretch reads GSLFRSFWYA…EEHMAKQYRG (525 aa). N-linked (GlcNAc...) asparagine glycosylation is present at Asn-337. The helical transmembrane segment at 564-584 threads the bilayer; that stretch reads LPFLFWFSVASLITLFHLFLF. Residues 585–608 lie on the Cytoplasmic side of the membrane; the sequence is KLIYNEYCGPGAKPLFRSKEDTSV.

It localises to the membrane. This is an uncharacterized protein from Xenopus tropicalis (Western clawed frog).